The sequence spans 200 residues: DNA dC-&gt;dU-editing enzyme APOBEC-3H (200 aa).

One can recognise a CMP/dCMP-type deaminase domain in the interval 4-126; it reads LTAETFRLQF…KPQQKGLRLL (123 aa). H54 contributes to the Zn(2+) binding site. The Proton donor role is filled by E56. The Zn(2+) site is built by C85 and C88. Residues 160–182 are a coiled coil; the sequence is YKMLEELDKNSRAIKRRLERIKI.

The protein belongs to the cytidine and deoxycytidylate deaminase family. In terms of assembly, homodimer. Interacts with AGO1, AGO2 and AGO3. The cofactor is Zn(2+). In terms of processing, (Microbial infection) Following infection by some HIV-1 strains, such as isolate BRU/LAI, can be ubiquitinated by a cullin-5-RING E3 ubiquitin-protein ligase complex (ECS complex) hijacked by the HIV-1 Vif protein, leading to its degradation. Ubiquitination by the ECS complex is however less efficent compared to APOBEC3G or APOBEC3G. As to expression, expressed in lymphoid organs. Also detected in non-lymphoid tissues including lung, testis, ovary, fetal liver and skin.

The protein resides in the cytoplasm. It localises to the nucleus. The protein localises to the P-body. The catalysed reaction is a 2'-deoxycytidine in single-stranded DNA + H2O + H(+) = a 2'-deoxyuridine in single-stranded DNA + NH4(+). Its activity is regulated as follows. APOBEC3H activity is regulated by RNA. While RNA-binding inhibits the DNA deaminase activity, double-stranded RNA is required for HIV-1 restriction by promoting APOBEC3H homodimerization and packaging into retroviral nucleocapsids. With respect to regulation, (Microbial infection) Antiviral activity is inhibited to some extent by the HIV-1 virion infectivity factor (VIF), that prevents its incorporation into progeny virions by both inhibiting its translation and/or by inducing its ubiquitination and subsequent degradation by the 26S proteasome. In terms of biological role, DNA deaminase (cytidine deaminase) which acts as an inhibitor of retrovirus replication and retrotransposon mobility via deaminase-dependent and -independent mechanisms. The A3H-var/haplotype 2 exhibits antiviral activity against vif-deficient HIV-1. After the penetration of retroviral nucleocapsids into target cells of infection and the initiation of reverse transcription, it can induce the conversion of cytosine to uracil in the minus-sense single-strand viral DNA, leading to G-to-A hypermutations in the subsequent plus-strand viral DNA. The resultant detrimental levels of mutations in the proviral genome, along with a deamination-independent mechanism that works prior to the proviral integration, together exert efficient antiretroviral effects in infected target cells. Selectively targets single-stranded DNA and does not deaminate double-stranded DNA or single- or double-stranded RNA. Exhibits antiviral activity also against T-cell leukemia virus type 1 (HTLV-1) and may inhibit the mobility of LTR and non-LTR retrotransposons. The protein is DNA dC-&gt;dU-editing enzyme APOBEC-3H of Homo sapiens (Human).